A 317-amino-acid polypeptide reads, in one-letter code: Ubiquinone biosynthesis protein COQ9, mitochondrial (317 aa).

A mitochondrion-targeting transit peptide spans Met1 to Arg46. The segment at Leu45–Gln97 is disordered. The segment covering Ala85–Glu96 has biased composition (acidic residues). A 1,2-diacylglycero-3-phosphoethanolamine is bound at residue Arg243.

This sequence belongs to the COQ9 family. Homodimer. Heterodimer; two heterodimers of COQ7:COQ9 come together on the same side of the lipid pseudo-bilayer and form a curved tetramer with a hydrophobic surface suitable for membrane interaction. These two tetramers assemble into a soluble octamer with a pseudo-bilayer of lipids captured within. Interacts with COQ7; this interaction allows ubiquinone (CoQ) isoprene intermediates presentation to COQ7 and facilitates the COQ7-mediated hydroxylase step.

The protein localises to the mitochondrion. Its pathway is cofactor biosynthesis; ubiquinone biosynthesis. Its function is as follows. Membrane-associated protein that warps the membrane surface to access and bind aromatic isoprenes with high specificity, including ubiquinone (CoQ) isoprene intermediates and presents them directly to COQ7, therefore facilitating the COQ7-mediated hydroxylase step. Participates in the biosynthesis of coenzyme Q, also named ubiquinone, an essential lipid-soluble electron transporter for aerobic cellular respiration. The polypeptide is Ubiquinone biosynthesis protein COQ9, mitochondrial (Xenopus tropicalis (Western clawed frog)).